We begin with the raw amino-acid sequence, 605 residues long: Lysophospholipase 1 (605 aa).

Positions Met-1 to Ala-17 are cleaved as a signal peptide. In terms of domain architecture, PLA2c spans Ser-30–Tyr-565. 7 N-linked (GlcNAc...) asparagine glycosylation sites follow: Asn-199, Asn-261, Asn-399, Asn-451, Asn-465, Asn-492, and Asn-573.

The protein belongs to the lysophospholipase family.

The protein resides in the secreted. The catalysed reaction is a 1-acyl-sn-glycero-3-phosphocholine + H2O = sn-glycerol 3-phosphocholine + a fatty acid + H(+). In terms of biological role, catalyzes the release of fatty acids from lysophospholipids. Phospholipase B may well contribute to pathogenicity by abetting the fungus in damaging and traversing host cell membranes, processes which likely increase the rapidity of disseminated infection. In Candida albicans (strain SC5314 / ATCC MYA-2876) (Yeast), this protein is Lysophospholipase 1.